The following is an 879-amino-acid chain: Alanine--tRNA ligase (879 aa).

Residues His567, His571, Cys669, and His673 each contribute to the Zn(2+) site.

This sequence belongs to the class-II aminoacyl-tRNA synthetase family. The cofactor is Zn(2+).

Its subcellular location is the cytoplasm. The enzyme catalyses tRNA(Ala) + L-alanine + ATP = L-alanyl-tRNA(Ala) + AMP + diphosphate. In terms of biological role, catalyzes the attachment of alanine to tRNA(Ala) in a two-step reaction: alanine is first activated by ATP to form Ala-AMP and then transferred to the acceptor end of tRNA(Ala). Also edits incorrectly charged Ser-tRNA(Ala) and Gly-tRNA(Ala) via its editing domain. This chain is Alanine--tRNA ligase, found in Levilactobacillus brevis (strain ATCC 367 / BCRC 12310 / CIP 105137 / JCM 1170 / LMG 11437 / NCIMB 947 / NCTC 947) (Lactobacillus brevis).